An 878-amino-acid polypeptide reads, in one-letter code: Phosphoenolpyruvate carboxylase (878 aa).

Active-site residues include His138 and Lys545.

The protein belongs to the PEPCase type 1 family. It depends on Mg(2+) as a cofactor.

It catalyses the reaction oxaloacetate + phosphate = phosphoenolpyruvate + hydrogencarbonate. In terms of biological role, forms oxaloacetate, a four-carbon dicarboxylic acid source for the tricarboxylic acid cycle. This is Phosphoenolpyruvate carboxylase from Shewanella sediminis (strain HAW-EB3).